Reading from the N-terminus, the 423-residue chain is Protein MANNAN SYNTHESIS-RELATED 2 (423 aa).

Residues 1–6 (MGVDLR) are Cytoplasmic-facing. The chain crosses the membrane as a helical; Signal-anchor for type II membrane protein span at residues 7-26 (QVVAGILTITMFVMLGQMLH). Topologically, residues 27–423 (RDYFDAVQEK…KNHLAYSCFC (397 aa)) are lumenal. Position 264 to 266 (264 to 266 (DLR)) interacts with substrate.

This sequence belongs to the glycosyltransferase GT106 family. As to expression, widely expressed.

It is found in the golgi apparatus membrane. It participates in glycan biosynthesis. In terms of biological role, glycosyltransferase involved in mannan biosynthesis. The sequence is that of Protein MANNAN SYNTHESIS-RELATED 2 from Arabidopsis thaliana (Mouse-ear cress).